We begin with the raw amino-acid sequence, 346 residues long: Tryptophan--tRNA ligase (346 aa).

Residues 10 to 12 and 18 to 19 each bind ATP; these read QAS and GN. The 'HIGH' region signature appears at 11-19; that stretch reads ASGKQHLGN. Aspartate 140 is a binding site for L-tryptophan. ATP contacts are provided by residues 152 to 154, isoleucine 191, and 200 to 204; these read GND and KMSKS. Positions 200–204 match the 'KMSKS' region motif; it reads KMSKS.

This sequence belongs to the class-I aminoacyl-tRNA synthetase family. As to quaternary structure, homodimer.

It is found in the cytoplasm. The catalysed reaction is tRNA(Trp) + L-tryptophan + ATP = L-tryptophyl-tRNA(Trp) + AMP + diphosphate + H(+). In terms of biological role, catalyzes the attachment of tryptophan to tRNA(Trp). This is Tryptophan--tRNA ligase from Mycoplasma pneumoniae (strain ATCC 29342 / M129 / Subtype 1) (Mycoplasmoides pneumoniae).